The following is a 549-amino-acid chain: Cytoplasmic trehalase (549 aa).

Residues R168, 175–176 (WD), N212, 221–223 (RSQ), 292–294 (RDE), and G324 contribute to the substrate site. Active-site proton donor/acceptor residues include D326 and E509. A substrate-binding site is contributed by E525.

The protein belongs to the glycosyl hydrolase 37 family. Monomer.

Its subcellular location is the cytoplasm. The enzyme catalyses alpha,alpha-trehalose + H2O = alpha-D-glucose + beta-D-glucose. The protein operates within glycan degradation; trehalose degradation; D-glucose from alpha,alpha-trehalose: step 1/1. Hydrolyzes trehalose to glucose. Could be involved, in cells returning to low osmolarity conditions, in the utilization of the accumulated cytoplasmic trehalose, which was synthesized in response to high osmolarity. This is Cytoplasmic trehalase from Shigella boydii serotype 4 (strain Sb227).